Reading from the N-terminus, the 294-residue chain is HTH-type transcriptional regulator DgdR (294 aa).

The HTH lysR-type domain maps to 14-70 (LEIDLLRSFVVIAEVRALSRAAARVGRTQSALSQQMKRLEDIVDQPLFQRTGRGVVL). The H-T-H motif DNA-binding region spans 31 to 50 (LSRAAARVGRTQSALSQQMK).

The protein belongs to the LysR transcriptional regulatory family.

In Burkholderia cepacia (Pseudomonas cepacia), this protein is HTH-type transcriptional regulator DgdR (dgdR).